The primary structure comprises 980 residues: Ovochymase-2 (980 aa).

The signal sequence occupies residues 1-21 (MAETSVFSIMMLTVMTAVGRG). Residues 22–49 (ATDRPGRVSRCGERPSANASVTYNLLSR) constitute a propeptide, activation peptide. N-linked (GlcNAc...) asparagine glycosylation is present at N39. The Peptidase S1 1 domain maps to 50–299 (IVGGTSAVKG…LLNWLSANLN (250 aa)). A disulfide bridge connects residues C75 and C91. The active-site Charge relay system is H90. Ca(2+) contacts are provided by V112 and E117. Residue D140 is the Charge relay system of the active site. 11 disulfide bridges follow: C174/C244, C205/C223, C234/C263, C312/C342, C369/C388, C435/C462, C489/C510, C618/C634, C716/C779, C744/C757, and C769/C798. S238 serves as the catalytic Charge relay system. CUB domains follow at residues 312–425 (CSTN…YQAV) and 435–547 (CGSV…ISFV). One can recognise a Peptidase S1 2 domain in the interval 593 to 822 (IIKAEEAMPN…FIPWIMETIL (230 aa)). Positions 593-980 (IIKAEEAMPN…WLSYSFHNQN (388 aa)) are cleaved as a propeptide — activation peptide. The N-linked (GlcNAc...) asparagine glycan is linked to N766. The segment at 835-863 (HHPLIPPDKLSQEKALLPDSPPSNDSSSS) is disordered. N-linked (GlcNAc...) asparagine glycosylation is found at N858 and N932.

Belongs to the peptidase S1 family. In terms of processing, the catalytically inactive 108 kDa form is processed both N- and C-terminally to give rise to catalytically active and inactive forms. As to expression, differentially expressed in the oviductal pars recta (PR) region.

The protein resides in the secreted. The enzyme catalyses Preferential cleavage at 371-Gly-Ser-Arg-|-Trp-374 of glycoprotein gp43 in Xenopus laevis coelemic egg envelope to yield gp41.. In terms of biological role, mediates gamete interaction by affecting the vitelline coat. In Rhinella arenarum (Argentine common toad), this protein is Ovochymase-2 (OVCH2).